A 255-amino-acid polypeptide reads, in one-letter code: Uracil-DNA glycosylase (255 aa).

The active-site Proton acceptor is D90.

The protein belongs to the uracil-DNA glycosylase (UDG) superfamily. UNG family.

The protein resides in the host nucleus. The enzyme catalyses Hydrolyzes single-stranded DNA or mismatched double-stranded DNA and polynucleotides, releasing free uracil.. In terms of biological role, excises uracil residues from the DNA which can arise as a result of misincorporation of dUMP residues by DNA polymerase or deamination of cytosines. Therefore may reduce deleterious uracil incorporation into the viral genome, particularly in terminally differentiated cells which lack DNA repair enzymes. This chain is Uracil-DNA glycosylase, found in Equine herpesvirus 2 (strain 86/87) (EHV-2).